Reading from the N-terminus, the 129-residue chain is Small ribosomal subunit protein uS8 (129 aa).

This sequence belongs to the universal ribosomal protein uS8 family. Part of the 30S ribosomal subunit. Contacts proteins S5 and S12.

In terms of biological role, one of the primary rRNA binding proteins, it binds directly to 16S rRNA central domain where it helps coordinate assembly of the platform of the 30S subunit. This is Small ribosomal subunit protein uS8 from Legionella pneumophila (strain Corby).